Consider the following 326-residue polypeptide: MYGIEYTTILIFLTSITLLNYILKSITRMMDYIIYRFLLIVVILATIINAQNYGVNLPITGSMDTAYADSTQSEPFLTSTLCLYYPVEASNEIADTEWKDTLSQLFLTKGWPTGSVYLKEYADIAAFSVEPQLYCDYNLVLMKYDSTQELDMSELADLILNEWLCNPMDITLYYYQQTDEANKWISTGSSCTVKVCPLNTQTLGIGCLITNPDTFETVATMEKLVITDVVDGVNHKLNVTTATCTIRNCKKLGPRENVAVIQVGGANVLDITADPTTTPQTERMMRINWKKWWQVFYTVVDYVNQIIQTMSKRSRSLNSSAFYYRV.

The N-terminal stretch at 1-50 is a signal peptide; the sequence is MYGIEYTTILIFLTSITLLNYILKSITRMMDYIIYRFLLIVVILATIINA. Intrachain disulfides connect Cys82-Cys135, Cys165-Cys249, Cys191-Cys244, and Cys196-Cys207. Asp95 provides a ligand contact to Ca(2+). The interval 165 to 167 is CNP motif; interaction with ITGAV/ITGB3; the sequence is CNP. Residues Gln177, Gly206, Thr214, Glu216, Asp228, Val229, and Asp231 each coordinate Ca(2+). Asn238 is a glycosylation site (N-linked (GlcNAc...) asparagine; by host). The interval 253–255 is GPR motif; interaction with ITGAX/ITGB2; that stretch reads GPR. Residue Asp301 participates in Ca(2+) binding. Asn318 is a glycosylation site (N-linked (GlcNAc...) asparagine; by host).

The protein belongs to the rotavirus VP7 family. As to quaternary structure, homotrimer; disulfide-linked. 2 Ca(2+) ions bound at each subunit interface in the trimer hold the trimer together. Interacts with the intermediate capsid protein VP6. Interacts with the outer capsid protein VP5*. Post-translationally, N-glycosylated. The N-terminus is blocked possibly by pyroglutamic acid.

The protein resides in the virion. It is found in the host endoplasmic reticulum lumen. In terms of biological role, calcium-binding protein that interacts with rotavirus cell receptors once the initial attachment by VP4 has been achieved. Rotavirus attachment and entry into the host cell probably involves multiple sequential contacts between the outer capsid proteins VP4 and VP7, and the cell receptors. Following entry into the host cell, low intracellular or intravesicular Ca(2+) concentration probably causes the calcium-stabilized VP7 trimers to dissociate from the virion. This step is probably necessary for the membrane-disrupting entry step and the release of VP4, which is locked onto the virion by VP7. This chain is Outer capsid glycoprotein VP7, found in Bos taurus (Bovine).